The following is a 369-amino-acid chain: Prenyltransferase malB (369 aa).

Glutamate 87 contributes to the substrate binding site. The dimethylallyl diphosphate site is built by arginine 100 and tyrosine 189. Residue tyrosine 191 participates in substrate binding.

This sequence belongs to the tryptophan dimethylallyltransferase family.

Its function is as follows. Prenyltransferase; part of the gene cluster that mediates the biosynthesis of malbrancheamide, a dichlorinated fungal indole alkaloid that belongs to a family of natural products containing a characteristic bicyclo[2.2.2]diazaoctane core. The first step of malbrancheamide biosynthesis involves coupling of L-proline and L-tryptophan by malG, a bimodular NRPS, to produce L-Pro-L-Trp aldehyde through reductive offloading. This compound undergoes spontaneous cyclization and dehydration to give a dienamine which is reverse prenylated at C-2 by malE. The other prenyltransferase present in the cluster, malB, displays modest activity, suggesting that may be a redundant gene in the pathway. Subsequently, a [4+2] Diels-Alder cyclo-addition catalyzed by the bifunctional enzyme malC forms the characteristic bicyclo[2.2.2]diazaoctane ring of premalbrancheamid. Finally, the flavin-dependent halogenase malA catalyzes the iterative dichlorination of the indole ring of premalbrancheamide to yield C-9 monochlorinated malbrancheamide B, C-8 monochlorinated isomalbrancheamide B, and dichlorinated malbrancheamide. MalA is also able to brominate premalbrancheamide at C-9 to yield malbrancheamide C, and, to a lesser extend, at C-8 to yield isomalbrancheamide C. Finally, malA can brominate C-9 monochlorinated malbrancheamide B at C-8 to yield malbrancheamide D, or C-8 monochlorinated isomalbrancheamide B at C-9 to produce isomalbrancheamide D. The chain is Prenyltransferase malB from Malbranchea aurantiaca.